The chain runs to 154 residues: Peptide methionine sulfoxide reductase MsrB (154 aa).

In terms of domain architecture, MsrB spans 28–150 (DQQWREQLSE…NSVSLIFNKI (123 aa)). Zn(2+) contacts are provided by Cys-67, Cys-70, Cys-116, and Cys-119. Cys-139 functions as the Nucleophile in the catalytic mechanism.

It belongs to the MsrB Met sulfoxide reductase family. The cofactor is Zn(2+).

It catalyses the reaction L-methionyl-[protein] + [thioredoxin]-disulfide + H2O = L-methionyl-(R)-S-oxide-[protein] + [thioredoxin]-dithiol. The chain is Peptide methionine sulfoxide reductase MsrB from Vibrio vulnificus (strain CMCP6).